A 402-amino-acid chain; its full sequence is Propionate kinase (402 aa).

Positions 11 and 18 each coordinate ATP. Position 11 (asparagine 11) interacts with Mg(2+). Arginine 86 serves as a coordination point for substrate. The active-site Proton donor/acceptor is aspartate 143. Residues histidine 175, 203 to 207 (HLGNG), 278 to 280 (DLR), and 326 to 330 (GIGEN) each bind ATP.

The protein belongs to the acetokinase family. TdcD subfamily. Homodimer. Mg(2+) serves as cofactor.

It carries out the reaction propanoate + ATP = propanoyl phosphate + ADP. It functions in the pathway amino-acid degradation; L-threonine degradation via propanoate pathway; propanoate from L-threonine: step 4/4. Its function is as follows. Catalyzes the conversion of propionyl phosphate and ADP to propionate and ATP. The polypeptide is Propionate kinase (Citrobacter koseri (strain ATCC BAA-895 / CDC 4225-83 / SGSC4696)).